Reading from the N-terminus, the 146-residue chain is Hemoglobin subunit beta (146 aa).

An N-acetylvaline; partial modification is found at Val-1. A Globin domain is found at 2–146 (HLTDAEKAAV…VANALAHKYH (145 aa)). A Phosphothreonine modification is found at Thr-12. Lys-59 is modified (N6-acetyllysine). Residue His-63 coordinates heme b. Position 82 is an N6-acetyllysine (Lys-82). His-92 serves as a coordination point for heme b. Cys-93 is subject to S-nitrosocysteine. N6-acetyllysine is present on Lys-144.

It belongs to the globin family. Heterotetramer of two alpha chains and two beta chains. In terms of tissue distribution, red blood cells.

In terms of biological role, involved in oxygen transport from the lung to the various peripheral tissues. In Procavia capensis habessinica (Abyssinian hyrax), this protein is Hemoglobin subunit beta (HBB).